We begin with the raw amino-acid sequence, 279 residues long: Large ribosomal subunit protein uL2 (279 aa).

Basic residues-rich tracts occupy residues 211–221 and 256–279; these read GRSRWRGKTPH and SYGKKTRDKKKPSTKFIVRGRKGK. The segment at 211-279 is disordered; the sequence is GRSRWRGKTP…KFIVRGRKGK (69 aa).

The protein belongs to the universal ribosomal protein uL2 family. Part of the 50S ribosomal subunit. Forms a bridge to the 30S subunit in the 70S ribosome.

In terms of biological role, one of the primary rRNA binding proteins. Required for association of the 30S and 50S subunits to form the 70S ribosome, for tRNA binding and peptide bond formation. It has been suggested to have peptidyltransferase activity; this is somewhat controversial. Makes several contacts with the 16S rRNA in the 70S ribosome. The chain is Large ribosomal subunit protein uL2 from Oenococcus oeni (strain ATCC BAA-331 / PSU-1).